The primary structure comprises 446 residues: Glutamine synthetase (446 aa).

Residues 18-103 (ENVRYLRLQF…LICDVYKTDG (86 aa)) enclose the GS beta-grasp domain. The GS catalytic domain occupies 110–446 (PRANLKRVLK…WERDQYMKQY (337 aa)). Mg(2+) contacts are provided by E134 and E136. Residue E186 coordinates ATP. Positions 191 and 198 each coordinate Mg(2+). L-glutamate-binding positions include 242 to 243 (NG) and G243. H247 is a Mg(2+) binding site. ATP is bound at residue S251. L-glutamate-binding residues include R300, E306, and R318. R318 and R323 together coordinate ATP. E335 serves as a coordination point for Mg(2+). Residue R337 coordinates L-glutamate.

It belongs to the glutamine synthetase family. Oligomer of 12 subunits arranged in the form of two hexagons. In its feedback-inhibited form, interacts with TnrA in order to block its DNA-binding activity. Mg(2+) is required as a cofactor.

The protein resides in the cytoplasm. It carries out the reaction L-glutamate + NH4(+) + ATP = L-glutamine + ADP + phosphate + H(+). Its activity is regulated as follows. Inhibited by glutamine. In terms of biological role, glutamine synthetase (GS) is an unusual multitasking protein that functions as an enzyme, a transcription coregulator, and a chaperone in ammonium assimilation and in the regulation of genes involved in nitrogen metabolism. It catalyzes the ATP-dependent biosynthesis of glutamine from glutamate and ammonia. Feedback-inhibited GlnA also interacts with and regulates the activity of the transcriptional regulator TnrA. During nitrogen limitation, TnrA is in its DNA-binding active state and turns on the transcription of genes required for nitrogen assimilation. Under conditions of nitrogen excess, feedback-inhibited GlnA forms a stable complex with TnrA, which inhibits its DNA-binding activity. In contrast, feedback-inhibited GlnA acts as a chaperone to stabilize the DNA-binding activity of GlnR, which represses the transcription of nitrogen assimilation genes. This Staphylococcus aureus (strain MRSA252) protein is Glutamine synthetase.